The chain runs to 398 residues: O-methyltransferase mpaG' (398 aa).

S144 is a (4E,8E)-10-(4,6-dihydroxy-7-methyl-3-oxo-1,3-dihydro-2-benzofuran-5-yl)-4,8-dimethyldeca-4,8-dienoate binding site. S144 provides a ligand contact to 4-farnesyl-3,5-dihydroxy-6-methylphthalide. 6-O-desmethylmycophenolate is bound at residue S144. N197 provides a ligand contact to S-adenosyl-L-homocysteine. Residue Y199 coordinates (4E,8E)-10-(4,6-dihydroxy-7-methyl-3-oxo-1,3-dihydro-2-benzofuran-5-yl)-4,8-dimethyldeca-4,8-dienoate. Y199 is a 4-farnesyl-3,5-dihydroxy-6-methylphthalide binding site. Y199 serves as a coordination point for 6-O-desmethylmycophenolate. Residues Y203, D237, G239, H244, D245, D264, and R265 each coordinate S-adenosyl-L-homocysteine. D264 contacts S-adenosyl-L-methionine. R265 and Q267 together coordinate (4E,8E)-10-(4,6-dihydroxy-7-methyl-3-oxo-1,3-dihydro-2-benzofuran-5-yl)-4,8-dimethyldeca-4,8-dienoate. Residue R265 coordinates 6-O-desmethylmycophenolate. S-adenosyl-L-homocysteine contacts are provided by D286, I287, and H302. Residue S303 coordinates (4E,8E)-10-(4,6-dihydroxy-7-methyl-3-oxo-1,3-dihydro-2-benzofuran-5-yl)-4,8-dimethyldeca-4,8-dienoate. S303 provides a ligand contact to 4-farnesyl-3,5-dihydroxy-6-methylphthalide. S303 is a binding site for 6-O-desmethylmycophenolate. H306 (proton acceptor) is an active-site residue. Residues E335 and E362 contribute to the active site.

It belongs to the class I-like SAM-binding methyltransferase superfamily. Cation-independent O-methyltransferase family. As to quaternary structure, homodimer.

Its subcellular location is the cytoplasm. The protein resides in the cytosol. The enzyme catalyses (4E,8E)-10-(4,6-dihydroxy-7-methyl-3-oxo-1,3-dihydro-2-benzofuran-5-yl)-4,8-dimethyldeca-4,8-dienoate + S-adenosyl-L-methionine = (4E,8E)-10-(4-hydroxy-6-methoxy-7-methyl-3-oxo-1,3-dihydro-2-benzofuran-5-yl)-4,8-dimethyldeca-4,8-dienoate + S-adenosyl-L-homocysteine + H(+). It carries out the reaction 4-farnesyl-3,5-dihydroxy-6-methylphthalide + S-adenosyl-L-methionine = 4-farnesyl-3,5-dihydroxy-6-methoxylphthalide + S-adenosyl-L-homocysteine + H(+). The catalysed reaction is 6-O-desmethylmycophenolate + S-adenosyl-L-methionine = mycophenolate + S-adenosyl-L-homocysteine + H(+). It participates in secondary metabolite biosynthesis; terpenoid biosynthesis. In terms of biological role, O-methyltransferase; part of the gene cluster that mediates the biosynthesis of mycophenolic acid (MPA), the first isolated antibiotic natural product in the world obtained from a culture of Penicillium brevicompactum in 1893. MpaG' catalyzes the 5-O-methylation of three precursors in MPA biosynthesis including demethylmycophenolic acid (DMMPA), 4-farnesyl-3,5-dihydroxy-6-methylphthalide (FDHMP), and an intermediate containing three fewer carbon atoms compared to FDHMP (FDHMP-3C) with different catalytic efficiencies. The first step of the pathway is the synthesis of 5-methylorsellinic acid (5MOA) by the cytosolic polyketide synthase mpaC. 5MOA is then converted to the phthalide compound 5,7-dihydroxy-4,6-dimethylphthalide (DHMP) by the endoplasmic reticulum-bound cytochrome P450 monooxygenase mpaDE. MpaDE first catalyzes hydroxylation of 5-MOA to 4,6-dihydroxy-2-(hydroxymethyl)-3-methylbenzoic acid (DHMB). MpaDE then acts as a lactone synthase that catalyzes the ring closure to convert DHMB into DHMP. The next step is the prenylation of DHMP by the Golgi apparatus-associated prenyltransferase mpaA to yield farnesyl-DHMP (FDHMP). The ER-bound oxygenase mpaB then mediates the oxidative cleavage the C19-C20 double bond in FDHMP to yield FDHMP-3C via a mycophenolic aldehyde intermediate. The O-methyltransferase mpaG catalyzes the methylation of FDHMP-3C to yield MFDHMP-3C. MpaG and mpaB can also switch the order in which they act and, in this case, the conversion of FDHMP to MFDHMP-3C can take place via 5-O-methyl-FDHMP (MFDHMP). After the cytosolic methylation of FDHMP-3C, MFDHMP-3C enters into peroxisomes probably via free diffusion due to its low molecular weight. Upon a peroxisomal CoA ligation reaction, catalyzed by a beta-oxidation component enzyme acyl-CoA ligase ACL891, MFDHMP-3C-CoA would then be restricted to peroxisomes for the following beta-oxidation pathway steps. The peroxisomal beta-oxidation machinery than converts MFDHMP-3C-CoA into MPA_CoA, via a beta-oxidation chain-shortening process. Finally mpaH acts as a peroxisomal acyl-CoA hydrolase with high substrate specificity toward MPA-CoA to release the final product MPA. MpaH can also hydrolyze DMMPA-CoA to release demethylmycophenolic acid (DMMPA) that is further converted to MPA by mpaG. The polypeptide is O-methyltransferase mpaG' (Penicillium brevicompactum).